A 525-amino-acid polypeptide reads, in one-letter code: Protein BSP1 (525 aa).

Disordered stretches follow at residues 21–40 (INKP…TPIE), 98–262 (QQQH…PSKM), 285–325 (LSSE…VPPK), and 339–525 (DKTG…PTKI). The segment covering 110 to 122 (IEPVRHIIPDRHS) has biased composition (basic and acidic residues). Residues 148–162 (NRASSENVVKSTTSA) show a composition bias toward polar residues. Basic and acidic residues-rich tracts occupy residues 171–182 (YKDDITAKKLDV), 201–223 (DKNK…EDNK), and 230–242 (KDQD…KPTR). Over residues 251-261 (QLKSPPQSPSK) the composition is skewed to polar residues. Residues 285–297 (LSSEENSRSSLSE) are compositionally biased toward low complexity. Composition is skewed to basic and acidic residues over residues 314–325 (KAEKKKPVVPPK) and 339–354 (DKTG…EPEF). A compositionally biased stretch (polar residues) spans 382–398 (QNLSKNTENKKSVAQSK). The segment covering 447-456 (EESEISDSEP) has biased composition (acidic residues). Residues 510 to 525 (NKSRSRGPKRKLPTKI) show a composition bias toward basic residues.

It localises to the cell membrane. The protein localises to the cytoplasm. Its subcellular location is the cytoskeleton. It is found in the actin patch. Functionally, cortical patch protein involved in endocytosis. This chain is Protein BSP1 (BSP1), found in Candida glabrata (strain ATCC 2001 / BCRC 20586 / JCM 3761 / NBRC 0622 / NRRL Y-65 / CBS 138) (Yeast).